Reading from the N-terminus, the 417-residue chain is MAEIRNYTLNFGPQHPAAHGVLRLVLELDGEVVQRADPHIGLLHRGTEKLAESKTFIQSLPYMDRLDYVSMMCNEHAYCLAIEKMMGIEVPERAQYIRVMFAEITRILNHLLWIGAHALDIGAMTMFLYAFREREDLMDCYEAVSGARMHAAYFRPGGVYRDLPDSMPQYTVSKIKNAKELARLNEGRKGSMLDFIEDFTKRFPTYVDEYETLLTDNRIWKQRTVGIGVVTPERALNLGMTGPMLRGSGIAWDLRKTQPYDVYDKMDFDVPVGVGGDCYDRYLVRVEEMRQSNRIIQQCVAWLRANPGPVITDNHKVAPPSREGMKSNMEDLIHHFKLFTEGMHVPEGEAYAAVEHPKGEFGIYLVSDGANKPYRLKIRAPGYAHLAALDEMATGHMIADVVAIIGTQDIVFGEIDR.

It belongs to the complex I 49 kDa subunit family. NDH-1 is composed of 14 different subunits. Subunits NuoB, C, D, E, F, and G constitute the peripheral sector of the complex.

The protein resides in the cell inner membrane. The catalysed reaction is a quinone + NADH + 5 H(+)(in) = a quinol + NAD(+) + 4 H(+)(out). Its function is as follows. NDH-1 shuttles electrons from NADH, via FMN and iron-sulfur (Fe-S) centers, to quinones in the respiratory chain. The immediate electron acceptor for the enzyme in this species is believed to be ubiquinone. Couples the redox reaction to proton translocation (for every two electrons transferred, four hydrogen ions are translocated across the cytoplasmic membrane), and thus conserves the redox energy in a proton gradient. The chain is NADH-quinone oxidoreductase subunit D from Chromobacterium violaceum (strain ATCC 12472 / DSM 30191 / JCM 1249 / CCUG 213 / NBRC 12614 / NCIMB 9131 / NCTC 9757 / MK).